The sequence spans 282 residues: Elongation factor Ts (282 aa).

The interval T80–V83 is involved in Mg(2+) ion dislocation from EF-Tu.

The protein belongs to the EF-Ts family.

It is found in the cytoplasm. Associates with the EF-Tu.GDP complex and induces the exchange of GDP to GTP. It remains bound to the aminoacyl-tRNA.EF-Tu.GTP complex up to the GTP hydrolysis stage on the ribosome. The protein is Elongation factor Ts of Chlamydia trachomatis serovar L2b (strain UCH-1/proctitis).